We begin with the raw amino-acid sequence, 373 residues long: Spermidine/putrescine import ATP-binding protein PotA (373 aa).

The ABC transporter domain maps to 11-241; that stretch reads IELRSLKKSY…PSNLFVAKFI (231 aa). ATP is bound at residue 43 to 50; sequence GPSGCGKT.

It belongs to the ABC transporter superfamily. Spermidine/putrescine importer (TC 3.A.1.11.1) family. As to quaternary structure, the complex is composed of two ATP-binding proteins (PotA), two transmembrane proteins (PotB and PotC) and a solute-binding protein (PotD).

It is found in the cell inner membrane. It catalyses the reaction ATP + H2O + polyamine-[polyamine-binding protein]Side 1 = ADP + phosphate + polyamineSide 2 + [polyamine-binding protein]Side 1.. In terms of biological role, part of the ABC transporter complex PotABCD involved in spermidine/putrescine import. Responsible for energy coupling to the transport system. In Mannheimia succiniciproducens (strain KCTC 0769BP / MBEL55E), this protein is Spermidine/putrescine import ATP-binding protein PotA.